The primary structure comprises 443 residues: D-inositol 3-phosphate glycosyltransferase (443 aa).

His26 provides a ligand contact to 1D-myo-inositol 3-phosphate. UDP-N-acetyl-alpha-D-glucosamine contacts are provided by residues 32–33 (QP) and Gly40. 1D-myo-inositol 3-phosphate-binding positions include 37-42 (DAGGMN), Lys95, Tyr128, Thr152, and Arg172. 3 residues coordinate UDP-N-acetyl-alpha-D-glucosamine: Arg246, Lys251, and Gln304. Mg(2+)-binding residues include Tyr313, Arg314, and Ala316. UDP-N-acetyl-alpha-D-glucosamine contacts are provided by Glu326 and Glu334. Mg(2+) is bound at residue Thr340.

This sequence belongs to the glycosyltransferase group 1 family. MshA subfamily. Homodimer.

The catalysed reaction is 1D-myo-inositol 3-phosphate + UDP-N-acetyl-alpha-D-glucosamine = 1D-myo-inositol 2-acetamido-2-deoxy-alpha-D-glucopyranoside 3-phosphate + UDP + H(+). Functionally, catalyzes the transfer of a N-acetyl-glucosamine moiety to 1D-myo-inositol 3-phosphate to produce 1D-myo-inositol 2-acetamido-2-deoxy-glucopyranoside 3-phosphate in the mycothiol biosynthesis pathway. The sequence is that of D-inositol 3-phosphate glycosyltransferase from Mycobacteroides abscessus (strain ATCC 19977 / DSM 44196 / CCUG 20993 / CIP 104536 / JCM 13569 / NCTC 13031 / TMC 1543 / L948) (Mycobacterium abscessus).